The chain runs to 253 residues: Chloride intracellular channel protein 4 (253 aa).

A2 carries the N-acetylalanine modification. Residues 2–101 are required for insertion into the membrane; sequence ALSMPLNGLK…EEFLEEVLCP (100 aa). Position 4 is a phosphoserine (S4). K24 bears the N6-acetyllysine mark. The G-site signature appears at 35–38; that stretch reads CPFS. Residues 37 to 57 traverse the membrane as a helical segment; the sequence is FSQRLFMILWLKGVVFSVTTV. A GST C-terminal domain is found at 81-244; the sequence is NSEVKTDVNK…PSDKEVEIAY (164 aa). K130 bears the N6-acetyllysine mark. Phosphoserine occurs at positions 132, 167, and 236. Y244 is modified (phosphotyrosine).

This sequence belongs to the chloride channel CLIC family. In terms of assembly, monomer. Interacts with HRH3. As to expression, detected in brain, in cell bodies and dendrites of Purkinje cells in cerebellar neurons (at protein level). Expressed neonatal and adult cardiomyocytes (at protein level). Marked expression was found in hippocampus and cerebellum, and in many other tissues.

The protein resides in the cytoplasm. It localises to the cytoskeleton. The protein localises to the microtubule organizing center. Its subcellular location is the centrosome. It is found in the cytoplasmic vesicle membrane. The protein resides in the nucleus. It localises to the cell membrane. The protein localises to the mitochondrion. Its subcellular location is the cell junction. It is found in the endoplasmic reticulum membrane. The catalysed reaction is chloride(in) = chloride(out). The enzyme catalyses thiocyanate(in) = thiocyanate(out). It catalyses the reaction nitrate(in) = nitrate(out). It carries out the reaction iodide(out) = iodide(in). The catalysed reaction is bromide(in) = bromide(out). The enzyme catalyses fluoride(in) = fluoride(out). It catalyses the reaction choline(out) = choline(in). Channel activity is redox- and pH-regulated. Anion vs cation selectivity is enhanced when fully oxidized. Its function is as follows. In the soluble state, catalyzes glutaredoxin-like thiol disulfide exchange reactions with reduced glutathione as electron donor. Can insert into membranes and form voltage-dependent multi-ion conductive channels. Membrane insertion seems to be redox-regulated and may occur only under oxidizing conditions. Has alternate cellular functions like a potential role in angiogenesis or in maintaining apical-basolateral membrane polarity during mitosis and cytokinesis. Could also promote endothelial cell proliferation and regulate endothelial morphogenesis (tubulogenesis). Promotes cell-surface expression of HRH3. This is Chloride intracellular channel protein 4 (Clic4) from Rattus norvegicus (Rat).